Here is a 259-residue protein sequence, read N- to C-terminus: Ribosomal RNA small subunit methyltransferase J (259 aa).

Residues Arg-109 to Asp-110, Glu-125 to Arg-126, Ser-161 to Ser-162, and Asp-179 each bind S-adenosyl-L-methionine.

It belongs to the methyltransferase superfamily. RsmJ family.

The protein localises to the cytoplasm. The catalysed reaction is guanosine(1516) in 16S rRNA + S-adenosyl-L-methionine = N(2)-methylguanosine(1516) in 16S rRNA + S-adenosyl-L-homocysteine + H(+). Its function is as follows. Specifically methylates the guanosine in position 1516 of 16S rRNA. The sequence is that of Ribosomal RNA small subunit methyltransferase J from Shewanella putrefaciens (strain CN-32 / ATCC BAA-453).